A 165-amino-acid polypeptide reads, in one-letter code: Phosphopantetheine adenylyltransferase (165 aa).

Ser10 contributes to the substrate binding site. Residues 10-11 (SF) and His18 each bind ATP. Substrate is bound by residues Lys42, Thr79, and Arg93. ATP is bound by residues 94–96 (GLR), Glu104, and 129–135 (VRPITAT).

The protein belongs to the bacterial CoaD family. In terms of assembly, homohexamer. The cofactor is Mg(2+).

It is found in the cytoplasm. The enzyme catalyses (R)-4'-phosphopantetheine + ATP + H(+) = 3'-dephospho-CoA + diphosphate. It functions in the pathway cofactor biosynthesis; coenzyme A biosynthesis; CoA from (R)-pantothenate: step 4/5. Reversibly transfers an adenylyl group from ATP to 4'-phosphopantetheine, yielding dephospho-CoA (dPCoA) and pyrophosphate. In Rhodopseudomonas palustris (strain HaA2), this protein is Phosphopantetheine adenylyltransferase.